A 96-amino-acid chain; its full sequence is MASEKYYIYVLYCADNSFYCGFTNNVKRRFHTHQTYQGAKYTRVKKRHPLKLIYSEEFESKHDALSAEYYFKHQTRRQKEKFLLDHGVDLLKLRRN.

The GIY-YIG domain maps to 4–81; that stretch reads EKYYIYVLYC…KHQTRRQKEK (78 aa).

It belongs to the UPF0213 family.

In Limosilactobacillus reuteri (strain DSM 20016) (Lactobacillus reuteri), this protein is UPF0213 protein Lreu_0682.